The primary structure comprises 259 residues: tRNA (guanine-N(7)-)-methyltransferase (259 aa).

The tract at residues 1–36 (MTFPSHNPPETGHPSAAPDEALPAAEAPVPGDPEAR) is disordered. The span at 14–29 (PSAAPDEALPAAEAPV) shows a compositional bias: low complexity. S-adenosyl-L-methionine-binding residues include Glu-91, Glu-116, Asp-143, and Asp-166. The active site involves Asp-166. Substrate contacts are provided by residues Lys-170, Asp-202, and 237-240 (TKFE).

The protein belongs to the class I-like SAM-binding methyltransferase superfamily. TrmB family.

The enzyme catalyses guanosine(46) in tRNA + S-adenosyl-L-methionine = N(7)-methylguanosine(46) in tRNA + S-adenosyl-L-homocysteine. It participates in tRNA modification; N(7)-methylguanine-tRNA biosynthesis. In terms of biological role, catalyzes the formation of N(7)-methylguanine at position 46 (m7G46) in tRNA. This chain is tRNA (guanine-N(7)-)-methyltransferase, found in Aromatoleum aromaticum (strain DSM 19018 / LMG 30748 / EbN1) (Azoarcus sp. (strain EbN1)).